Here is a 628-residue protein sequence, read N- to C-terminus: UvrABC system protein C (628 aa).

The 80-residue stretch at 20–99 folds into the GIY-YIG domain; sequence TSAGVYLMRD…IKTHKPRYNV (80 aa). The region spanning 209–244 is the UVR domain; the sequence is AELLAQLEDQMQTAAAAMNFEHAARLRDRITGLNQL.

It belongs to the UvrC family. As to quaternary structure, interacts with UvrB in an incision complex.

The protein localises to the cytoplasm. Its function is as follows. The UvrABC repair system catalyzes the recognition and processing of DNA lesions. UvrC both incises the 5' and 3' sides of the lesion. The N-terminal half is responsible for the 3' incision and the C-terminal half is responsible for the 5' incision. The polypeptide is UvrABC system protein C (Gloeobacter violaceus (strain ATCC 29082 / PCC 7421)).